A 408-amino-acid polypeptide reads, in one-letter code: Zinc chaperone AztD (408 aa).

A signal peptide spans 1–21; sequence MLRHLAGASALALTLAGAGFA. An N-terminal Zn(2+)-binding motif; binds a third Zn(2+) with low affinity motif is present at residues 23–29; that stretch reads DHDHDHE. 7 residues coordinate Zn(2+): His-99, His-102, Asp-104, His-124, His-167, His-218, and His-408. Cys-214 and Cys-231 form a disulfide bridge.

As to quaternary structure, monomer.

The protein localises to the periplasm. Its function is as follows. Acts as a zinc chaperone in the AztABCD zinc transport system. Directly transfers one zinc cation to the solute binding protein AztC; the transfer occurs without the formation of a stable interaction. Binds 3 Zn(2+), two with high affinity and one with low affinity, and transfers only Zn(2+) bound to site 2 to AztC. Likely functions to store zinc in the periplasm and may be important for zinc accumulation in zinc-limited environments. This chain is Zinc chaperone AztD, found in Paracoccus denitrificans (strain Pd 1222).